The sequence spans 144 residues: Transcriptional regulator MraZ (144 aa).

SpoVT-AbrB domains lie at 5–47 and 77–120; these read TYTP…PRAE and TDEQ…DAQA.

It belongs to the MraZ family. In terms of assembly, forms oligomers.

It is found in the cytoplasm. It localises to the nucleoid. In Mycolicibacterium gilvum (strain PYR-GCK) (Mycobacterium gilvum (strain PYR-GCK)), this protein is Transcriptional regulator MraZ.